The following is a 220-amino-acid chain: Flagellin A2 (220 aa).

Positions 1–11 (MFNNITDDDRG) are excised as a propeptide. 4 N-linked (GlcNAc...) asparagine glycosylation sites follow: asparagine 78, asparagine 95, asparagine 112, and asparagine 124.

It belongs to the archaeal flagellin family. In terms of processing, glycosylated by a pentasaccharide similar to the S-layer glycoprotein, probably comprising a hexose, 2 hexuronic acids, a methyl ester of a hexuronic acid and mannose.

The protein resides in the archaeal flagellum. In terms of biological role, flagellin that plays both structural and regulatory roles in flagella biosynthesis. Does not constitute a major flagellin in terms of abundance contrary to FlgA1: may regulate the flagella-dependent swimming motility depending on the relative abundance of FlgA1. Not involved in PibD-dependent surface adhesion. The chain is Flagellin A2 (flgA2) from Haloferax volcanii (strain ATCC 29605 / DSM 3757 / JCM 8879 / NBRC 14742 / NCIMB 2012 / VKM B-1768 / DS2) (Halobacterium volcanii).